The following is a 420-amino-acid chain: Methylaspartate ammonia-lyase 1 (420 aa).

A (2S,3S)-3-methyl-L-aspartate-binding site is contributed by Gln-173. Positions 237, 272, and 306 each coordinate Mg(2+). Gln-328 contributes to the (2S,3S)-3-methyl-L-aspartate binding site. The active-site Proton acceptor is the Lys-330. 359–360 (SC) is a binding site for (2S,3S)-3-methyl-L-aspartate.

In terms of assembly, homodimer. Requires Mg(2+) as cofactor.

It catalyses the reaction (2S,3S)-3-methyl-L-aspartate = mesaconate + NH4(+). The protein operates within amino-acid degradation; L-glutamate degradation via mesaconate pathway; acetate and pyruvate from L-glutamate: step 2/4. Functionally, involved in the methylaspartate cycle. Catalyzes the formation of the alpha,beta-unsaturated bond by the reversible anti elimination of ammonia from L-threo-beta-methylaspartate (L-threo-(2S,3S)-3-methylaspartate) to give mesaconate. It can also catalyze the amination of fumarate and ethylfumarate, and the deamination of hydroxylamine, hydrazine, methylamine and ethylamine. In Carboxydothermus hydrogenoformans (strain ATCC BAA-161 / DSM 6008 / Z-2901), this protein is Methylaspartate ammonia-lyase 1.